A 306-amino-acid polypeptide reads, in one-letter code: N-acetylmuramic acid 6-phosphate etherase (306 aa).

In terms of domain architecture, SIS spans 59 to 222; it reads TSQALAKGGR…STGTMVMLGK (164 aa). The Proton donor role is filled by Glu87. Residue Glu118 is part of the active site.

Belongs to the GCKR-like family. MurNAc-6-P etherase subfamily. In terms of assembly, homodimer.

It catalyses the reaction N-acetyl-D-muramate 6-phosphate + H2O = N-acetyl-D-glucosamine 6-phosphate + (R)-lactate. It functions in the pathway amino-sugar metabolism; N-acetylmuramate degradation. Specifically catalyzes the cleavage of the D-lactyl ether substituent of MurNAc 6-phosphate, producing GlcNAc 6-phosphate and D-lactate. This chain is N-acetylmuramic acid 6-phosphate etherase, found in Microcystis aeruginosa (strain NIES-843 / IAM M-2473).